A 369-amino-acid chain; its full sequence is Peptide chain release factor 2 (369 aa).

Gln-249 bears the N5-methylglutamine mark.

The protein belongs to the prokaryotic/mitochondrial release factor family. Methylated by PrmC. Methylation increases the termination efficiency of RF2.

The protein resides in the cytoplasm. In terms of biological role, peptide chain release factor 2 directs the termination of translation in response to the peptide chain termination codons UGA and UAA. The sequence is that of Peptide chain release factor 2 from Thermosipho melanesiensis (strain DSM 12029 / CIP 104789 / BI429).